The chain runs to 379 residues: ATP phosphoribosyltransferase regulatory subunit (379 aa).

This sequence belongs to the class-II aminoacyl-tRNA synthetase family. HisZ subfamily. In terms of assembly, heteromultimer composed of HisG and HisZ subunits.

It is found in the cytoplasm. It functions in the pathway amino-acid biosynthesis; L-histidine biosynthesis; L-histidine from 5-phospho-alpha-D-ribose 1-diphosphate: step 1/9. In terms of biological role, required for the first step of histidine biosynthesis. May allow the feedback regulation of ATP phosphoribosyltransferase activity by histidine. This is ATP phosphoribosyltransferase regulatory subunit from Sinorhizobium fredii (strain NBRC 101917 / NGR234).